The following is a 507-amino-acid chain: ATP synthase subunit alpha, chloroplastic (507 aa).

ATP is bound at residue 170–177 (GDRQTGKT). Thr257 bears the Phosphothreonine mark.

It belongs to the ATPase alpha/beta chains family. F-type ATPases have 2 components, CF(1) - the catalytic core - and CF(0) - the membrane proton channel. CF(1) has five subunits: alpha(3), beta(3), gamma(1), delta(1), epsilon(1). CF(0) has four main subunits: a, b, b' and c.

The protein resides in the plastid. It is found in the chloroplast thylakoid membrane. The enzyme catalyses ATP + H2O + 4 H(+)(in) = ADP + phosphate + 5 H(+)(out). Functionally, produces ATP from ADP in the presence of a proton gradient across the membrane. The alpha chain is a regulatory subunit. This is ATP synthase subunit alpha, chloroplastic from Lobularia maritima (Sweet alyssum).